Consider the following 100-residue polypeptide: Ubiquinol-cytochrome-C reductase complex subunit IX, mitochondrial (100 aa).

The N-terminal 30 residues, 1 to 30 (MQTHVRRVALQALRPCLRAGLMAPKFPVRF), are a transit peptide targeting the mitochondrion. A helical transmembrane segment spans residues 66–86 (LLMRLFFAFVAYVVAMKVFGA).

Plants bc1 complex contains 10 subunits; 3 respiratory subunits, 2 core proteins and 5 low-molecular weight proteins.

It is found in the mitochondrion inner membrane. In terms of biological role, this is a component of the ubiquinol-cytochrome c reductase complex (complex III or cytochrome b-c1 complex), which is part of the mitochondrial respiratory chain. The polypeptide is Ubiquinol-cytochrome-C reductase complex subunit IX, mitochondrial (Euglena gracilis).